The following is a 28-amino-acid chain: uncharacterized protein (28 aa).

This is an uncharacterized protein from Saccharomyces cerevisiae (strain ATCC 204508 / S288c) (Baker's yeast).